A 98-amino-acid polypeptide reads, in one-letter code: NADH-ubiquinone oxidoreductase chain 4L (98 aa).

The next 3 helical transmembrane spans lie at 1-21 (MPVV…GLLI), 29-49 (SLLC…VTVL), and 61-81 (IILL…LVMV).

The protein belongs to the complex I subunit 4L family. As to quaternary structure, core subunit of respiratory chain NADH dehydrogenase (Complex I) which is composed of 45 different subunits.

The protein localises to the mitochondrion inner membrane. The enzyme catalyses a ubiquinone + NADH + 5 H(+)(in) = a ubiquinol + NAD(+) + 4 H(+)(out). Core subunit of the mitochondrial membrane respiratory chain NADH dehydrogenase (Complex I) which catalyzes electron transfer from NADH through the respiratory chain, using ubiquinone as an electron acceptor. Part of the enzyme membrane arm which is embedded in the lipid bilayer and involved in proton translocation. The chain is NADH-ubiquinone oxidoreductase chain 4L (MT-ND4L) from Ursus americanus (American black bear).